We begin with the raw amino-acid sequence, 123 residues long: uncharacterized protein (123 aa).

In terms of domain architecture, Rhodanese spans 17–117; sequence LNNNAFLVDV…NNQDKGWKQN (101 aa).

This is an uncharacterized protein from Rickettsia prowazekii (strain Madrid E).